The chain runs to 87 residues: Toxin Cll5c (87 aa).

A signal peptide spans 1–19; the sequence is MNSLLMITACLVLFGTVWA. An LCN-type CS-alpha/beta domain is found at 20 to 85; sequence KEGYLVNKST…TYPLPNKSCS (66 aa). Intrachain disulfides connect cysteine 31-cysteine 84, cysteine 35-cysteine 60, cysteine 44-cysteine 65, and cysteine 48-cysteine 67. Residues 86 to 87 constitute a propeptide, removed by a carboxypeptidase; sequence KK.

The protein belongs to the long (4 C-C) scorpion toxin superfamily. Sodium channel inhibitor family. Beta subfamily. As to expression, expressed by the venom gland.

It is found in the secreted. Its function is as follows. Beta toxins bind voltage-independently at site-4 of sodium channels (Nav) and shift the voltage of activation toward more negative potentials thereby affecting sodium channel activation and promoting spontaneous and repetitive firing. This is Toxin Cll5c from Centruroides limpidus (Mexican scorpion).